The sequence spans 117 residues: Large ribosomal subunit protein uL22 (117 aa).

Belongs to the universal ribosomal protein uL22 family. As to quaternary structure, part of the 50S ribosomal subunit.

In terms of biological role, this protein binds specifically to 23S rRNA; its binding is stimulated by other ribosomal proteins, e.g. L4, L17, and L20. It is important during the early stages of 50S assembly. It makes multiple contacts with different domains of the 23S rRNA in the assembled 50S subunit and ribosome. Its function is as follows. The globular domain of the protein is located near the polypeptide exit tunnel on the outside of the subunit, while an extended beta-hairpin is found that lines the wall of the exit tunnel in the center of the 70S ribosome. The protein is Large ribosomal subunit protein uL22 of Lactobacillus gasseri (strain ATCC 33323 / DSM 20243 / BCRC 14619 / CIP 102991 / JCM 1131 / KCTC 3163 / NCIMB 11718 / NCTC 13722 / AM63).